The following is a 332-amino-acid chain: tRNA dimethylallyltransferase (332 aa).

Residue glycine 17–serine 24 coordinates ATP. Threonine 19 to serine 24 is a binding site for substrate. Interaction with substrate tRNA stretches follow at residues aspartate 42–glutamine 45 and glutamine 166–arginine 170.

Belongs to the IPP transferase family. Monomer. It depends on Mg(2+) as a cofactor.

The enzyme catalyses adenosine(37) in tRNA + dimethylallyl diphosphate = N(6)-dimethylallyladenosine(37) in tRNA + diphosphate. Catalyzes the transfer of a dimethylallyl group onto the adenine at position 37 in tRNAs that read codons beginning with uridine, leading to the formation of N6-(dimethylallyl)adenosine (i(6)A). The polypeptide is tRNA dimethylallyltransferase (Gluconacetobacter diazotrophicus (strain ATCC 49037 / DSM 5601 / CCUG 37298 / CIP 103539 / LMG 7603 / PAl5)).